The following is a 284-amino-acid chain: Short chain dehydrogenase/reductase AacuD (284 aa).

Residue V37 coordinates NADP(+). Residues S166 and Y180 each act as proton donor in the active site. Residues Y180, K184, and T215 each contribute to the NADP(+) site. The Lowers pKa of active site Tyr role is filled by K184.

The protein belongs to the short-chain dehydrogenases/reductases (SDR) family.

The protein operates within secondary metabolite biosynthesis. Functionally, short chain dehydrogenase/reductase; part of the gene cluster that mediates the biosynthesis of the tetrahydroxanthone dimer secalonic acid D. The pathway begins with the synthesis of atrochrysone thioester by the polyketide synthase AacuL. The atrochrysone carboxyl ACP thioesterase AacuM then breaks the thioester bond and releases the atrochrysone carboxylic acid from AacuL. Atrochrysone carboxylic acid is decarboxylated by the decarboxylase AacuI, and oxidized by the anthrone oxygenase AacuG to yield emodin. Emodin is then reduced to emodin hydroquinone by a yet unidentified oxidoreductase. A-ring reduction by the short chain dehydrogenase AacuN, dehydration by the scytalone dehydratase-like protein AacuK and probable spontaneous re-oxidation, results in overall deoxygenation to chrysophanol. Baeyer-Villiger oxidation by the Baeyer-Villiger monooxygenase (BVMO) AacuH then yields monodictyphenone. Monodictyphenone is transformed into compounds with the tetrahydroxanthone skeleton via methylesterification by the methyltransferase AacuQ, followed by the action of the flavin-dependent monooxygenase AacuC, the isomerase AacuP, and the short chain dehydrogenase/reductase AacuF or AacuD. AacuF and AacuD should accept the same compound as a substrate but perform the ketoreduction with a different stereoselectivity, thus yielding blennolides B and A, respectively. In the final step of the biosynthesis, the cytochrome P450 monooxygenase AacuE accepts blennolide B and/or blennolide A to conduct the dimerization reaction to furnish the tetrahydroxanthone dimers, secalonic acids D, B, and F. The protein is Short chain dehydrogenase/reductase AacuD of Aspergillus aculeatus (strain ATCC 16872 / CBS 172.66 / WB 5094).